The chain runs to 68 residues: Negative regulator of P-body association (68 aa).

Residues 1 to 68 (MGDQPCASGR…LKSHPPPPEK (68 aa)) are disordered.

As to quaternary structure, interacts with mRNA decapping proteins DCP1A, DCP2 and EDC4.

It localises to the cytoplasm. The protein localises to the P-body. Promotes dispersal of P-body components and is likely to play a role in the mRNA decapping process. The sequence is that of Negative regulator of P-body association from Homo sapiens (Human).